The following is a 458-amino-acid chain: Sulfite efflux pump SSU1 (458 aa).

The Cytoplasmic segment spans residues 1–11; that stretch reads MVANWVLALTR. The chain crosses the membrane as a helical span at residues 12 to 32; that stretch reads QFDPFMFMMVMGVGISSNILY. Residues 33-48 are Extracellular-facing; sequence SFPYPARWLRICSYIM. The helical transmembrane segment at 49–69 threads the bilayer; that stretch reads FAIACLIFIAVQALQILHLIV. Residues 70-89 are Cytoplasmic-facing; sequence YIKEKSFREYFNDFFRNMKH. Residues 90–110 traverse the membrane as a helical segment; sequence NLFWGTYPMGLVTIINFLGAL. Topologically, residues 111 to 135 are extracellular; sequence SKANTTKSPTNARNLMIFVYVLWWY. The chain crosses the membrane as a helical span at residues 136–156; that stretch reads DLAVCLVIAWGISFLIWHDYY. Topologically, residues 157 to 176 are cytoplasmic; sequence PLEGIGNYPSYNIKMASENM. A helical transmembrane segment spans residues 177–197; it reads KSVLLLDIIPLVVVASSCGTF. Over 198–220 the chain is Extracellular; sequence TMSEIFFHAFNRNIQLITLVICA. Residues 221–241 traverse the membrane as a helical segment; sequence LTWLHAIIFVFILIAIYFWSL. The Cytoplasmic segment spans residues 242–252; that stretch reads YINKIPPMTQV. The helical transmembrane segment at 253 to 275 threads the bilayer; the sequence is FTLFLLLGPMGQGSFGVLLLTDN. At 276–309 the chain is on the extracellular side; that stretch reads IKKYAGKYYPTDNITREQEILTIAVPWCFKILGM. A helical membrane pass occupies residues 310-330; that stretch reads VSAMALLAMGYFFTVISVVSI. Over 331 to 350 the chain is Cytoplasmic; sequence LSYYNKKEIENETGKVKRVY. A helical membrane pass occupies residues 351–371; it reads TFHKGFWGMTFPMGTMSLGNE. Residues 372–387 lie on the Extracellular side of the membrane; it reads ELYVQYNQYVPLYAFR. A helical membrane pass occupies residues 388 to 408; the sequence is VLGTIYGGVCVCWSILCLLCT. At 409–458 the chain is on the cytoplasmic side; that stretch reads LHEYSKKMLHAARKSSLFSESGTEKTTVSPYNSIESVEESNSALDFTRLA. 3 positions are modified to phosphoserine: Ser444, Ser448, and Ser450.

The protein belongs to the tellurite-resistance/dicarboxylate transporter (TDT) family.

It localises to the cell membrane. In terms of biological role, involved in efflux of free sulfite. Mutations in the SSU1 gene cause sensitivity to sulfite. The sequence is that of Sulfite efflux pump SSU1 (SSU1) from Saccharomyces cerevisiae (strain ATCC 204508 / S288c) (Baker's yeast).